A 490-amino-acid polypeptide reads, in one-letter code: GTPase Der (490 aa).

EngA-type G domains lie at 3–166 and 203–376; these read PVVA…VDEI and IKLA…DSST. Residues 9–16, 56–60, 118–121, 209–216, 256–260, and 321–324 each bind GTP; these read GRPNVGKS, DTGGI, NKTD, DTAGV, and NKWD. The KH-like domain occupies 377-461; sequence RRQSTAMLTR…PIRIQFKEGE (85 aa).

The protein belongs to the TRAFAC class TrmE-Era-EngA-EngB-Septin-like GTPase superfamily. EngA (Der) GTPase family. Associates with the 50S ribosomal subunit.

In terms of biological role, GTPase that plays an essential role in the late steps of ribosome biogenesis. This Enterobacter sp. (strain 638) protein is GTPase Der.